Reading from the N-terminus, the 337-residue chain is Glyceraldehyde-3-phosphate dehydrogenase, cytosolic (337 aa).

Residues 1–151 (MAKVKVGING…YKSDLNIVSN (151 aa)) form a binding to NAD region. NAD(+)-binding positions include 13–14 (RI), aspartate 35, and arginine 82. The segment at 152–337 (ASCTTNCLAP…DLIMHISKCQ (186 aa)) is catalytic. Residues 153–155 (SCT), threonine 184, 213–214 (TG), and arginine 236 each bind D-glyceraldehyde 3-phosphate. Cysteine 154 (nucleophile) is an active-site residue. Residue asparagine 318 participates in NAD(+) binding.

Belongs to the glyceraldehyde-3-phosphate dehydrogenase family. As to quaternary structure, homotetramer.

Its subcellular location is the cytoplasm. The catalysed reaction is D-glyceraldehyde 3-phosphate + phosphate + NAD(+) = (2R)-3-phospho-glyceroyl phosphate + NADH + H(+). It participates in carbohydrate degradation; glycolysis; pyruvate from D-glyceraldehyde 3-phosphate: step 1/5. Functionally, key enzyme in glycolysis that catalyzes the first step of the pathway by converting D-glyceraldehyde 3-phosphate (G3P) into 3-phospho-D-glyceroyl phosphate. Essential for the maintenance of cellular ATP levels and carbohydrate metabolism. This is Glyceraldehyde-3-phosphate dehydrogenase, cytosolic (GAPC) from Mesembryanthemum crystallinum (Common ice plant).